The sequence spans 673 residues: UPF0313 protein blr7973 (673 aa).

In terms of domain architecture, Radical SAM core spans 332 to 611 (AWDMIKFSVT…KAFLRYHDPD (280 aa)). Residues Cys-346, Cys-350, and Cys-353 each contribute to the [4Fe-4S] cluster site. A disordered region spans residues 632-673 (RPDQLVPAHQPPGTGKAAGTRRPVRPGGKTQRFTTKGLRVMK).

Belongs to the UPF0313 family. The cofactor is [4Fe-4S] cluster.

In Bradyrhizobium diazoefficiens (strain JCM 10833 / BCRC 13528 / IAM 13628 / NBRC 14792 / USDA 110), this protein is UPF0313 protein blr7973.